Consider the following 238-residue polypeptide: Ribitol-5-phosphate cytidylyltransferase (238 aa).

CTP contacts are provided by residues 7 to 10 and 80 to 86; these read FAGG and GETGQES.

Belongs to the IspD/TarI cytidylyltransferase family. TarI subfamily.

The enzyme catalyses D-ribitol 5-phosphate + CTP + H(+) = CDP-L-ribitol + diphosphate. Its function is as follows. Catalyzes the transfer of the cytidylyl group of CTP to D-ribitol 5-phosphate. The chain is Ribitol-5-phosphate cytidylyltransferase from Vibrio parahaemolyticus serotype O3:K6 (strain RIMD 2210633).